A 31-amino-acid chain; its full sequence is Protamine-Z (31 aa).

The tract at residues 1–31 (ARRRRSRRASRPVRRRRPRRVSRRRRARRRR) is disordered.

Testis.

The protein resides in the nucleus. Its subcellular location is the chromosome. Its function is as follows. Protamines substitute for histones in the chromatin of sperm during the haploid phase of spermatogenesis. They compact sperm DNA into a highly condensed, stable and inactive complex. The chain is Protamine-Z from Clupea harengus (Atlantic herring).